A 352-amino-acid polypeptide reads, in one-letter code: Geranylgeranyl transferase type-1 subunit beta (352 aa).

PFTB repeat units lie at residues 135–180 (VNKK…FILD), 187–228 (KESA…SLLG), 236–276 (FKEQ…MMID), and 283–325 (FASI…SFGN). Residues 213 to 215 (HGG) and 255 to 258 (RTNK) contribute to the geranylgeranyl diphosphate site. The Zn(2+) site is built by Asp261 and Cys263. 264-267 (YAFW) contacts geranylgeranyl diphosphate. His313 serves as a coordination point for Zn(2+).

This sequence belongs to the protein prenyltransferase subunit beta family. In terms of assembly, heterodimer of an alpha and a beta subunit. Requires Zn(2+) as cofactor. Mg(2+) is required as a cofactor.

The catalysed reaction is geranylgeranyl diphosphate + L-cysteinyl-[protein] = S-geranylgeranyl-L-cysteinyl-[protein] + diphosphate. Catalyzes the transfer of a geranyl-geranyl moiety from geranyl-geranyl pyrophosphate to a cysteine at the fourth position from the C-terminus of proteins having the C-terminal sequence Cys-aliphatic-aliphatic-X. This Dictyostelium discoideum (Social amoeba) protein is Geranylgeranyl transferase type-1 subunit beta (pggt1b).